A 183-amino-acid chain; its full sequence is Probable chemoreceptor glutamine deamidase CheD (183 aa).

The protein belongs to the CheD family.

The enzyme catalyses L-glutaminyl-[protein] + H2O = L-glutamyl-[protein] + NH4(+). Probably deamidates glutamine residues to glutamate on methyl-accepting chemotaxis receptors (MCPs), playing an important role in chemotaxis. The protein is Probable chemoreceptor glutamine deamidase CheD of Rhizobium meliloti (strain 1021) (Ensifer meliloti).